A 560-amino-acid polypeptide reads, in one-letter code: Probable methionine--tRNA ligase, cytoplasmic (560 aa).

A 'HIGH' region motif is present at residues 16 to 26 (PYVNNQPHLGN). Residues 347 to 351 (KFSKS) carry the 'KMSKS' region motif. K350 contacts ATP.

Belongs to the class-I aminoacyl-tRNA synthetase family.

Its subcellular location is the cytoplasm. The enzyme catalyses tRNA(Met) + L-methionine + ATP = L-methionyl-tRNA(Met) + AMP + diphosphate. This is Probable methionine--tRNA ligase, cytoplasmic from Vairimorpha ceranae (strain BRL01) (Microsporidian parasite).